Consider the following 320-residue polypeptide: Lipoyl synthase (320 aa).

The tract at residues 1 to 29 (MVTVVDRVTNRRLRHPEKAHRPDTSVQKK) is disordered. Basic and acidic residues predominate over residues 19-29 (AHRPDTSVQKK). 7 residues coordinate [4Fe-4S] cluster: C59, C64, C70, C85, C89, C92, and S298. The 217-residue stretch at 71-287 (WSQRHASFMI…AKIGKVKGFL (217 aa)) folds into the Radical SAM core domain.

The protein belongs to the radical SAM superfamily. Lipoyl synthase family. [4Fe-4S] cluster serves as cofactor.

Its subcellular location is the cytoplasm. It catalyses the reaction [[Fe-S] cluster scaffold protein carrying a second [4Fe-4S](2+) cluster] + N(6)-octanoyl-L-lysyl-[protein] + 2 oxidized [2Fe-2S]-[ferredoxin] + 2 S-adenosyl-L-methionine + 4 H(+) = [[Fe-S] cluster scaffold protein] + N(6)-[(R)-dihydrolipoyl]-L-lysyl-[protein] + 4 Fe(3+) + 2 hydrogen sulfide + 2 5'-deoxyadenosine + 2 L-methionine + 2 reduced [2Fe-2S]-[ferredoxin]. It participates in protein modification; protein lipoylation via endogenous pathway; protein N(6)-(lipoyl)lysine from octanoyl-[acyl-carrier-protein]: step 2/2. Catalyzes the radical-mediated insertion of two sulfur atoms into the C-6 and C-8 positions of the octanoyl moiety bound to the lipoyl domains of lipoate-dependent enzymes, thereby converting the octanoylated domains into lipoylated derivatives. The protein is Lipoyl synthase of Bartonella tribocorum (strain CIP 105476 / IBS 506).